We begin with the raw amino-acid sequence, 80 residues long: Dermaseptin-A5 (80 aa).

An N-terminal signal peptide occupies residues 1 to 22 (MAFLKKSLFLVLFLGLVSLSIC). A propeptide spanning residues 23–43 (EEEKRENEDEEEQEDDEQSEM) is cleaved from the precursor. The disordered stretch occupies residues 24-45 (EEKRENEDEEEQEDDEQSEMKR). A compositionally biased stretch (acidic residues) spans 30 to 40 (EDEEEQEDDEQ). V77 is modified (valine amide). A propeptide spanning residues 79 to 80 (EQ) is cleaved from the precursor.

It belongs to the frog skin active peptide (FSAP) family. Dermaseptin subfamily. As to expression, expressed by the skin glands.

Its subcellular location is the secreted. Its function is as follows. Possesses a potent antimicrobial activity against Gram-positive and Gram-negative bacteria. Probably acts by disturbing membrane functions with its amphipathic structure. The chain is Dermaseptin-A5 from Agalychnis annae (Blue-sided leaf frog).